The primary structure comprises 269 residues: Acyl-CoA-binding domain-containing protein 4 (269 aa).

The 90-residue stretch at C12–D101 folds into the ACB domain. Residues I23 to Y32, Y43 to K47, K69, and Y88 each bind an acyl-CoA. 3 disordered regions span residues G150–L175, E195–A226, and V248–N269. Positions P156 to P167 are enriched in pro residues. Phosphoserine occurs at positions 166 and 171.

Functionally, binds medium- and long-chain acyl-CoA esters and may function as an intracellular carrier of acyl-CoA esters. This Pongo abelii (Sumatran orangutan) protein is Acyl-CoA-binding domain-containing protein 4 (ACBD4).